The following is a 391-amino-acid chain: Na(+)/H(+) antiporter NhaA (391 aa).

11 helical membrane-spanning segments follow: residues 14–34 (AGGI…NSPL), 59–79 (LIHW…GLEV), 95–115 (SLPT…YLIF), 124–144 (VGWA…MALL), 154–174 (VFLL…IAMF), 177–197 (TDLS…LVGL), 213–233 (LILW…GVII), 261–281 (FVIL…GMSL), 292–312 (IALG…FVAV), 331–351 (VAVM…LAFI), and 363–383 (LGIL…LSKV).

Belongs to the NhaA Na(+)/H(+) (TC 2.A.33) antiporter family.

It localises to the cell inner membrane. It catalyses the reaction Na(+)(in) + 2 H(+)(out) = Na(+)(out) + 2 H(+)(in). Its function is as follows. Na(+)/H(+) antiporter that extrudes sodium in exchange for external protons. This chain is Na(+)/H(+) antiporter NhaA, found in Shewanella loihica (strain ATCC BAA-1088 / PV-4).